Here is a 290-residue protein sequence, read N- to C-terminus: Iron-sulfur cluster carrier protein (290 aa).

47–54 lines the ATP pocket; it reads GKGGVGKS.

It belongs to the Mrp/NBP35 ATP-binding proteins family. In terms of assembly, homodimer.

Binds and transfers iron-sulfur (Fe-S) clusters to target apoproteins. Can hydrolyze ATP. In Methanocaldococcus jannaschii (strain ATCC 43067 / DSM 2661 / JAL-1 / JCM 10045 / NBRC 100440) (Methanococcus jannaschii), this protein is Iron-sulfur cluster carrier protein.